The chain runs to 328 residues: MLNEFPIFDYEDIQLIPNKCVIKSRAEADTSVTLGNHTFKLPVVPANMQTILDENVAEQLAKGGYFYIMHRFDEAGRIPFIKRMHNQGLIASISVGVKDYEYDFVRQLKTDAPEYITIDIAHGHADSVISMIQHIKKELPDTFVIAGNVGTPEAVRELENAGADATKVGIGPGKVCITKVKTGFGTGGWQLAALRWCAKAARKPIIADGGIRTHGDIAKSIRFGASMIMIGSLFAGHIESPGKTIEVDGEQFKEYYGSASQYQKGAYKNVEGKRILLPAKGHLQDTLTEMEQDLQSAISYAGGRQVADLKHVDYVIVKNSIWNGDASH.

C176 acts as the Thioimidate intermediate in catalysis. An NADP(+)-binding site is contributed by 205-228; sequence IIADGGIRTHGDIAKSIRFGASMI.

It belongs to the IMPDH/GMPR family. GuaC type 2 subfamily.

The catalysed reaction is IMP + NH4(+) + NADP(+) = GMP + NADPH + 2 H(+). Catalyzes the irreversible NADPH-dependent deamination of GMP to IMP. It functions in the conversion of nucleobase, nucleoside and nucleotide derivatives of G to A nucleotides, and in maintaining the intracellular balance of A and G nucleotides. The polypeptide is GMP reductase (Streptococcus pneumoniae (strain ATCC 700669 / Spain 23F-1)).